The following is a 103-amino-acid chain: Small ribosomal subunit protein uS10 (103 aa).

Belongs to the universal ribosomal protein uS10 family. In terms of assembly, part of the 30S ribosomal subunit.

Involved in the binding of tRNA to the ribosomes. The protein is Small ribosomal subunit protein uS10 of Ruthia magnifica subsp. Calyptogena magnifica.